A 195-amino-acid chain; its full sequence is Calcineurin B homologous protein 1 (195 aa).

Glycine 2 is lipidated: N-myristoyl glycine. The short motif at 2–6 is the Necessary for association with microtubule and interaction with GAPDH element; that stretch reads GSRAS. EF-hand domains lie at 26–61, 71–106, 110–145, and 151–186; these read SQIT…AINP, FSEG…NGPE, SRSN…MVGV, and QLGS…VDVE. Aspartate 123, aspartate 125, aspartate 127, lysine 129, and glutamate 134 together coordinate Ca(2+). The short motif at 138–147 is the Nuclear export signal 1 element; that stretch reads VLRMMVGVNI. Ca(2+)-binding residues include aspartate 164, aspartate 166, aspartate 168, and glutamate 175. The short motif at 176–185 is the Nuclear export signal 2 element; that stretch reads FVKVLEKVDV.

Belongs to the calcineurin regulatory subunit family. CHP subfamily. In terms of assembly, monomer. Interacts with STK17B; the interaction occurs in a calcium-independent manner and induces the translocation of CHP1 from the Golgi to the nucleus. Interacts with GAPDH; the interaction is direct, occurs in a N-myristoylation-dependent manner and facilitates the ability of CHP1 to bind microtubules. Interacts with KIF1B (via the C-terminal end of the kinesin-motor domain); the interaction occurs in a calcium-dependent manner. Associates (via C-terminal domain) with microtubules; the association occurs with polymerized microtubules during the cell cycle in a myristoylation- and calcium-independent manner and is enhanced by GAPDH. Interacts with PPP3CA. Interacts with SLC9A1/NHE1 (via the cytoplasmic C-terminal domain); the interaction occurs at the plasma membrane in a calcium-dependent manner and at a domain that is critical for growth factor stimulation of the exchanger. Interacts with SLC9A3; increases SLC9A3 trafficking and activity at the plasma membrane. Phosphorylated; decreased phosphorylation is associated with an increase in SLC9A1/NHE1 Na(+)/H(+) exchange activity. Phosphorylation occurs in serum-dependent manner. The phosphorylation state may regulate the binding to SLC9A1/NHE1. In terms of processing, both N-myristoylation and calcium-mediated conformational changes are essential for its function in exocytic traffic. N-myristoylation is required for its association with microtubules and interaction with GAPDH, but not for the constitutive association to membranes.

It is found in the nucleus. It localises to the cytoplasm. The protein resides in the cytoskeleton. The protein localises to the endomembrane system. Its subcellular location is the endoplasmic reticulum-Golgi intermediate compartment. It is found in the endoplasmic reticulum. It localises to the cell membrane. The protein resides in the membrane. Calcium-binding protein involved in different processes such as regulation of vesicular trafficking, plasma membrane Na(+)/H(+) exchanger and gene transcription. Involved in the constitutive exocytic membrane traffic. Mediates the association between microtubules and membrane-bound organelles of the endoplasmic reticulum and Golgi apparatus and is also required for the targeting and fusion of transcytotic vesicles (TCV) with the plasma membrane. Functions as an integral cofactor in cell pH regulation by controlling plasma membrane-type Na(+)/H(+) exchange activity. Affects the pH sensitivity of SLC9A1/NHE1 by increasing its sensitivity at acidic pH. Required for the stabilization and localization of SLC9A1/NHE1 at the plasma membranes. Inhibits serum- and GTPase-stimulated Na(+)/H(+) exchange. Plays a role as an inhibitor of ribosomal RNA transcription by repressing the nucleolar UBF1 transcriptional activity. May sequester UBF1 in the nucleoplasm and limit its translocation to the nucleolus. Associates to the ribosomal gene promoter. Acts as a negative regulator of the calcineurin/NFAT signaling pathway. Inhibits NFAT nuclear translocation and transcriptional activity by suppressing the calcium-dependent calcineurin phosphatase activity. Also negatively regulates the kinase activity of the apoptosis-induced kinase STK17B. Inhibits both STK17B auto- and substrate-phosphorylations in a calcium-dependent manner. In Mus musculus (Mouse), this protein is Calcineurin B homologous protein 1 (Chp1).